Reading from the N-terminus, the 119-residue chain is MAKIKKGDLVQVITGAKQERGGDRGKQGKVLRVFPDTNRVLVEGINRVTKHSKVGQSQRGTKTGGIEVVEAPIHVSNVALVDPSTKKPTRVGFRLDTVEKDGATKTVRIRVSKATGKDI.

The protein belongs to the universal ribosomal protein uL24 family. As to quaternary structure, part of the 50S ribosomal subunit.

Its function is as follows. One of two assembly initiator proteins, it binds directly to the 5'-end of the 23S rRNA, where it nucleates assembly of the 50S subunit. Functionally, one of the proteins that surrounds the polypeptide exit tunnel on the outside of the subunit. The sequence is that of Large ribosomal subunit protein uL24 from Paenarthrobacter aurescens (strain TC1).